The following is a 291-amino-acid chain: Undecaprenyl-diphosphatase (291 aa).

Helical transmembrane passes span 1–21 (MLIL…LTEF), 48–68 (SAFT…AWVF), 99–119 (LHII…DDVI), 123–143 (LFSV…MIIA), 159–179 (INYF…WPGF), 200–220 (SDFT…LSLV), 236–256 (LGFL…LYLI), and 269–289 (IVLV…QGIT).

It belongs to the UppP family.

It is found in the cell membrane. It carries out the reaction di-trans,octa-cis-undecaprenyl diphosphate + H2O = di-trans,octa-cis-undecaprenyl phosphate + phosphate + H(+). Its function is as follows. Catalyzes the dephosphorylation of undecaprenyl diphosphate (UPP). Confers resistance to bacitracin. This chain is Undecaprenyl-diphosphatase, found in Staphylococcus saprophyticus subsp. saprophyticus (strain ATCC 15305 / DSM 20229 / NCIMB 8711 / NCTC 7292 / S-41).